A 458-amino-acid polypeptide reads, in one-letter code: Ribosomal protein uS12 methylthiotransferase RimO (458 aa).

In terms of domain architecture, MTTase N-terminal spans 8-119 (PTVAFAHLGC…IVDVLQRVEV (112 aa)). [4Fe-4S] cluster is bound by residues Cys-17, Cys-53, Cys-82, Cys-157, Cys-161, and Cys-164. The Radical SAM core domain maps to 143–372 (TTDQAVAFLK…MALQQPISAE (230 aa)). A TRAM domain is found at 375–446 (SRWVGRTVDV…IYDLNGQMVG (72 aa)).

It belongs to the methylthiotransferase family. RimO subfamily. It depends on [4Fe-4S] cluster as a cofactor.

The protein localises to the cytoplasm. The catalysed reaction is L-aspartate(89)-[ribosomal protein uS12]-hydrogen + (sulfur carrier)-SH + AH2 + 2 S-adenosyl-L-methionine = 3-methylsulfanyl-L-aspartate(89)-[ribosomal protein uS12]-hydrogen + (sulfur carrier)-H + 5'-deoxyadenosine + L-methionine + A + S-adenosyl-L-homocysteine + 2 H(+). Functionally, catalyzes the methylthiolation of an aspartic acid residue of ribosomal protein uS12. This chain is Ribosomal protein uS12 methylthiotransferase RimO, found in Synechococcus sp. (strain CC9605).